The following is an 896-amino-acid chain: Protein argonaute 9 (896 aa).

In terms of domain architecture, PAZ spans Pro-267–Ser-380. One can recognise a Piwi domain in the interval Phe-550 to Lys-857.

Belongs to the argonaute family. Ago subfamily. In terms of tissue distribution, expressed in embryonic shoot apex region, pollen and developing ovules.

Involved in RNA-mediated post-transcriptional gene silencing (PTGS). Main component of the RNA-induced silencing complex (RISC) that binds to a short guide RNA such as a microRNA (miRNA) or small interfering RNA (siRNA). RISC uses the mature miRNA or siRNA as a guide for slicer-directed cleavage of homologous mRNAs to repress gene expression. Associates preferentially with small RNAs of 24 nucleotide in length with a 5' terminal adenosine. Interacts with 24 nucleotide sRNAs derived from transposable elements (TEs). Required to silence pericentrometric-located TEs in female gametes and their accessory cells. Necessary to inactivate a significant proportion of long terminal repeat retrotransposons (LTRs) in the ovule. Required to specify cell fate in ovule. Involved in the control of female gamete formation by restricting the specification of gametophyte precursors in a dosage-dependent, non-cell-autonomous manner. Targeted by turnip yellows virus (TuYV) protein P0 (via F-box-like domain) for probable proteasome degradation and thereby inactivating AGO9 function in RNA silencing. This Arabidopsis thaliana (Mouse-ear cress) protein is Protein argonaute 9 (AGO9).